The following is a 418-amino-acid chain: 1-deoxy-D-xylulose 5-phosphate reductoisomerase (418 aa).

Residues T32, G33, S34, I35, and N150 each coordinate NADPH. K151 contributes to the 1-deoxy-D-xylulose 5-phosphate binding site. Residue E152 participates in NADPH binding. D174 lines the Mn(2+) pocket. 4 residues coordinate 1-deoxy-D-xylulose 5-phosphate: S175, E176, S200, and H223. E176 provides a ligand contact to Mn(2+). G229 lines the NADPH pocket. 1-deoxy-D-xylulose 5-phosphate is bound by residues S236, N241, K242, and E245. Mn(2+) is bound at residue E245.

Belongs to the DXR family. The cofactor is Mg(2+). Requires Mn(2+) as cofactor.

It carries out the reaction 2-C-methyl-D-erythritol 4-phosphate + NADP(+) = 1-deoxy-D-xylulose 5-phosphate + NADPH + H(+). It functions in the pathway isoprenoid biosynthesis; isopentenyl diphosphate biosynthesis via DXP pathway; isopentenyl diphosphate from 1-deoxy-D-xylulose 5-phosphate: step 1/6. Catalyzes the NADPH-dependent rearrangement and reduction of 1-deoxy-D-xylulose-5-phosphate (DXP) to 2-C-methyl-D-erythritol 4-phosphate (MEP). The protein is 1-deoxy-D-xylulose 5-phosphate reductoisomerase of Streptomyces coelicolor (strain ATCC BAA-471 / A3(2) / M145).